A 211-amino-acid chain; its full sequence is Superoxide dismutase [Mn] (211 aa).

Residues His-27, His-82, Asp-165, and His-169 each coordinate Mn(2+).

The protein belongs to the iron/manganese superoxide dismutase family. As to quaternary structure, homodimer. Mn(2+) serves as cofactor.

It catalyses the reaction 2 superoxide + 2 H(+) = H2O2 + O2. Functionally, destroys superoxide anion radicals which are normally produced within the cells and which are toxic to biological systems. The sequence is that of Superoxide dismutase [Mn] (sodA) from Bordetella pertussis (strain Tohama I / ATCC BAA-589 / NCTC 13251).